The sequence spans 89 residues: Large ribosomal subunit protein bL31B (89 aa).

It belongs to the bacterial ribosomal protein bL31 family. Type B subfamily. Part of the 50S ribosomal subunit.

This is Large ribosomal subunit protein bL31B from Pseudomonas fluorescens (strain ATCC BAA-477 / NRRL B-23932 / Pf-5).